We begin with the raw amino-acid sequence, 646 residues long: Wee1-like protein kinase (646 aa).

The disordered stretch occupies residues Met1 to Lys181. Residues Asp32–Glu43 show a composition bias toward acidic residues. Phosphoserine; by PLK1 is present on Ser53. Residues Ser78 and Ser85 each carry the phosphoserine modification. Residues Leu94–Asp103 are compositionally biased toward low complexity. Ser123 is modified (phosphoserine; by CDK1). A phosphoserine mark is found at Ser127, Ser137, Ser139, Ser150, and Ser165. Positions Arg158 to His170 are enriched in basic and acidic residues. A phosphothreonine mark is found at Thr187, Thr190, and Thr239. 3 positions are modified to phosphoserine: Ser270, Ser307, and Ser312. A Protein kinase domain is found at Phe299 to Leu569. ATP contacts are provided by residues Ile305–Val313 and Lys328. Position 342 (Asn342) interacts with Mg(2+). Residue Asp426 is the Proton acceptor of the active site. The Mg(2+) site is built by Asn431, Asp463, and Gly465. Residue Ser642 is modified to Phosphoserine; by BRSK1 and BRSK2.

This sequence belongs to the protein kinase superfamily. Ser/Thr protein kinase family. WEE1 subfamily. Mg(2+) is required as a cofactor. Phosphorylated during M and G1 phases. Also autophosphorylated. Phosphorylation at Ser-642 by BRSK1 and BRSK2 in post-mitotic neurons, leads to down-regulate WEE1 activity in polarized neurons. Phosphorylated at Ser-53 and Ser-123 by PLK1 and CDK1, respectively, generating an signal for degradation that can be recognized by the SCF(BTRC) complex, leading to its ubiquitination and degradation at the onset of G2/M phase. Post-translationally, dephosphorylated at Thr-239 by CTDP1. Dephosphorylated at Ser-53 and Ser-123 by the serine/threonine-protein phosphatase 2A preventing its ubiquitin-mediated degradation. In terms of processing, ubiquitinated and degraded at the onset of G2/M phase.

Its subcellular location is the nucleus. The catalysed reaction is L-tyrosyl-[protein] + ATP = O-phospho-L-tyrosyl-[protein] + ADP + H(+). With respect to regulation, synthesis is increased during S and G2 phases, presumably by an increase in transcription; activity is decreased by phosphorylation during M phase. Protein levels fall in M phase as a result of decreased synthesis combined with degradation. Activity seems to be negatively regulated by phosphorylation upon entry into mitosis, although N-terminal phosphorylation might also regulate the protein stability via protection from proteolysis or might regulate the subcellular location. In terms of biological role, acts as a negative regulator of entry into mitosis (G2 to M transition) by protecting the nucleus from cytoplasmically activated cyclin B1-complexed CDK1 before the onset of mitosis by mediating phosphorylation of CDK1 on 'Tyr-15'. Specifically phosphorylates and inactivates cyclin B1-complexed CDK1 reaching a maximum during G2 phase and a minimum as cells enter M phase. Phosphorylation of cyclin B1-CDK1 occurs exclusively on 'Tyr-15' and phosphorylation of monomeric CDK1 does not occur. Its activity increases during S and G2 phases and decreases at M phase when it is hyperphosphorylated. A correlated decrease in protein level occurs at M/G1 phase, probably due to its degradation. In Homo sapiens (Human), this protein is Wee1-like protein kinase.